The following is a 639-amino-acid chain: Probable endo-1,3(4)-beta-glucanase ACLA_073210 (639 aa).

A signal peptide spans 1-21 (MAPSSLLLSVGSLIASSLASA). The GH16 domain maps to 26 to 290 (IREQSQSYQL…WAGNVFGESG (265 aa)). N-linked (GlcNAc...) asparagine glycosylation is present at N65. E146 functions as the Nucleophile in the catalytic mechanism. The active-site Proton donor is the E151. 2 disordered regions span residues 337–384 (TVAS…TVAE) and 442–545 (QSSS…GSSI). A compositionally biased stretch (polar residues) spans 339 to 348 (ASPNTASEVH). Composition is skewed to low complexity over residues 362 to 376 (PTVP…VPPA) and 478 to 488 (TTTEAVAETET). A lipid anchor (GPI-anchor amidated alanine) is attached at A617. Residues 618–639 (GARKLSVGLSGLVGALAVAALA) constitute a propeptide, removed in mature form.

This sequence belongs to the glycosyl hydrolase 16 family.

Its subcellular location is the cell membrane. The catalysed reaction is Endohydrolysis of (1-&gt;3)- or (1-&gt;4)-linkages in beta-D-glucans when the glucose residue whose reducing group is involved in the linkage to be hydrolyzed is itself substituted at C-3.. In terms of biological role, mixed-linked glucanase involved in the degradation of complex natural cellulosic substrates. The protein is Probable endo-1,3(4)-beta-glucanase ACLA_073210 of Aspergillus clavatus (strain ATCC 1007 / CBS 513.65 / DSM 816 / NCTC 3887 / NRRL 1 / QM 1276 / 107).